A 622-amino-acid polypeptide reads, in one-letter code: uncharacterized protein (622 aa).

Residues cysteine 302, cysteine 306, cysteine 310, and cysteine 521 each coordinate [4Fe-4S] cluster.

This sequence belongs to the AOR/FOR family. [4Fe-4S] cluster serves as cofactor.

This is an uncharacterized protein from Methanocaldococcus jannaschii (strain ATCC 43067 / DSM 2661 / JAL-1 / JCM 10045 / NBRC 100440) (Methanococcus jannaschii).